A 524-amino-acid polypeptide reads, in one-letter code: Protein MGF 505-2R (524 aa).

The protein belongs to the asfivirus MGF 505 family.

Functionally, plays a role in virus cell tropism, and may be required for efficient virus replication in macrophages. The polypeptide is Protein MGF 505-2R (Ornithodoros (relapsing fever ticks)).